We begin with the raw amino-acid sequence, 170 residues long: Adenine phosphoribosyltransferase (170 aa).

It belongs to the purine/pyrimidine phosphoribosyltransferase family. As to quaternary structure, homodimer.

Its subcellular location is the cytoplasm. It catalyses the reaction AMP + diphosphate = 5-phospho-alpha-D-ribose 1-diphosphate + adenine. It participates in purine metabolism; AMP biosynthesis via salvage pathway; AMP from adenine: step 1/1. In terms of biological role, catalyzes a salvage reaction resulting in the formation of AMP, that is energically less costly than de novo synthesis. This chain is Adenine phosphoribosyltransferase, found in Bacillus subtilis (strain 168).